Consider the following 333-residue polypeptide: MRQTPLWAENWPIAYSVIQAIVILLVVVLVAALMSFIERRLLAWWQDRYGPNRVGPGGMFQIVADMLKIMFKEDWTPKFADKLTFRMAPAVAMATAVLSFIVIPVSPTLGVADMSIGLLFFMAMAGIAVYAVLFGGWASNNKYSLLGGLRSAAQTISYEVFLGISLMGVVAIAGSFNLREIVEAQRDMWFIVPQFLGFMIFVVAGVAVTHRHPFDQPEAEQELAEGYHVEYGGMKWGMFFVAEYVNIVLISALIVTLFFGGWLAPFNLEIPFIPPVFWFIVKTAFFVMMFVLARGALMRPRYDQVMNFGWKVCLPLALVNLMVTGAVILMNQA.

The next 8 membrane-spanning stretches (helical) occupy residues 17–37, 91–111, 116–136, 156–176, 188–208, 244–264, 272–292, and 310–330; these read VIQA…MSFI, VAMA…TLGV, IGLL…LFGG, ISYE…AGSF, MWFI…GVAV, YVNI…GWLA, FIPP…MFVL, and WKVC…VILM.

Belongs to the complex I subunit 1 family. NDH-1 is composed of 14 different subunits. Subunits NuoA, H, J, K, L, M, N constitute the membrane sector of the complex.

It is found in the cell inner membrane. The catalysed reaction is a quinone + NADH + 5 H(+)(in) = a quinol + NAD(+) + 4 H(+)(out). Functionally, NDH-1 shuttles electrons from NADH, via FMN and iron-sulfur (Fe-S) centers, to quinones in the respiratory chain. The immediate electron acceptor for the enzyme in this species is believed to be ubiquinone. Couples the redox reaction to proton translocation (for every two electrons transferred, four hydrogen ions are translocated across the cytoplasmic membrane), and thus conserves the redox energy in a proton gradient. This subunit may bind ubiquinone. In Acinetobacter baylyi (strain ATCC 33305 / BD413 / ADP1), this protein is NADH-quinone oxidoreductase subunit H.